Here is a 444-residue protein sequence, read N- to C-terminus: Tubulin beta chain (444 aa).

The GTP site is built by Gln11, Glu69, Ser138, Gly142, Thr143, Gly144, Asn204, and Asn226. Glu69 contributes to the Mg(2+) binding site.

It belongs to the tubulin family. Dimer of alpha and beta chains. A typical microtubule is a hollow water-filled tube with an outer diameter of 25 nm and an inner diameter of 15 nM. Alpha-beta heterodimers associate head-to-tail to form protofilaments running lengthwise along the microtubule wall with the beta-tubulin subunit facing the microtubule plus end conferring a structural polarity. Microtubules usually have 13 protofilaments but different protofilament numbers can be found in some organisms and specialized cells. It depends on Mg(2+) as a cofactor.

It is found in the cytoplasm. It localises to the cytoskeleton. Its function is as follows. Tubulin is the major constituent of microtubules, a cylinder consisting of laterally associated linear protofilaments composed of alpha- and beta-tubulin heterodimers. Microtubules grow by the addition of GTP-tubulin dimers to the microtubule end, where a stabilizing cap forms. Below the cap, tubulin dimers are in GDP-bound state, owing to GTPase activity of alpha-tubulin. The sequence is that of Tubulin beta chain (TBB) from Onchocerca gibsoni.